The sequence spans 206 residues: Dephospho-CoA kinase (206 aa).

Residues 4-200 (IVALTGGIGS…HRYLKLATAA (197 aa)) enclose the DPCK domain. Position 12–17 (12–17 (GSGKST)) interacts with ATP.

It belongs to the CoaE family.

It localises to the cytoplasm. It catalyses the reaction 3'-dephospho-CoA + ATP = ADP + CoA + H(+). The protein operates within cofactor biosynthesis; coenzyme A biosynthesis; CoA from (R)-pantothenate: step 5/5. Functionally, catalyzes the phosphorylation of the 3'-hydroxyl group of dephosphocoenzyme A to form coenzyme A. This chain is Dephospho-CoA kinase, found in Yersinia pestis.